The following is a 464-amino-acid chain: ATP-dependent protease ATPase subunit HslU (464 aa).

ATP is bound by residues valine 19, glycine 61 to glutamate 66, aspartate 278, glutamate 342, and arginine 414.

This sequence belongs to the ClpX chaperone family. HslU subfamily. In terms of assembly, a double ring-shaped homohexamer of HslV is capped on each side by a ring-shaped HslU homohexamer. The assembly of the HslU/HslV complex is dependent on binding of ATP.

The protein localises to the cytoplasm. ATPase subunit of a proteasome-like degradation complex; this subunit has chaperone activity. The binding of ATP and its subsequent hydrolysis by HslU are essential for unfolding of protein substrates subsequently hydrolyzed by HslV. HslU recognizes the N-terminal part of its protein substrates and unfolds these before they are guided to HslV for hydrolysis. This chain is ATP-dependent protease ATPase subunit HslU, found in Halalkalibacterium halodurans (strain ATCC BAA-125 / DSM 18197 / FERM 7344 / JCM 9153 / C-125) (Bacillus halodurans).